The primary structure comprises 1197 residues: Neural cell adhesion molecule L1.1 (1197 aa).

Ig-like C2-type domains follow at residues 1-58, 69-160, 165-263, 268-355, and 360-442; these read EFRQ…TAVS, PSLA…EPMS, PSNS…YTVT, PYWT…THVH, and PAQI…KSIS. Residues 1–1054 lie on the Extracellular side of the membrane; the sequence is EFRQRDPSPS…SPRNFATEGW (1054 aa). Cys92 and Cys143 are disulfide-bonded. N-linked (GlcNAc...) asparagine glycosylation is found at Asn135, Asn149, Asn221, Asn298, Asn414, Asn421, Asn438, and Asn449. Cystine bridges form between Cys199/Cys247, Cys289/Cys339, and Cys383/Cys432. Positions 451–541 constitute an Ig-like C2-type 6 domain; it reads TKIVGPPQNL…DSDTASGYIT (91 aa). Residues Cys472 and Cys525 are joined by a disulfide bond. 5 Fibronectin type-III domains span residues 548–643, 645–742, 747–852, 853–952, and 953–1048; these read PPQS…TPAA, PDTN…SGED, APSA…TPEG, APGP…LLDG, and EPPS…SPRN. Over residues 630–640 the composition is skewed to polar residues; that stretch reads APTESSLSYST. The tract at residues 630-655 is disordered; sequence APTESSLSYSTPAAKPDTNPENVMTL. Residue Asn708 is glycosylated (N-linked (GlcNAc...) asparagine). N-linked (GlcNAc...) asparagine glycosylation is found at Asn959, Asn968, Asn1002, and Asn1027. A helical membrane pass occupies residues 1055–1075; sequence FIGLISALVLLLLVLLLLCYI. Residues 1076-1197 are Cytoplasmic-facing; it reads KKSKGGKYSV…TSVTGILGPN (122 aa). Disordered stretches follow at residues 1115–1135 and 1154–1197; these read MEKC…SNDS and IGQY…LGPN.

This sequence belongs to the immunoglobulin superfamily. L1/neurofascin/NgCAM family. As to expression, expressed in postmitotic neurons in 16-36 hours embryos, including those in the brain, cranial ganglia and otic and olfactory placodes, and in all classes of spinal neurons.

It localises to the cell membrane. The protein resides in the cell projection. It is found in the growth cone. Functionally, cell adhesion molecule with an important role in the development of the nervous system. Involved in neuron-neuron adhesion, neurite fasciculation, outgrowth of neurites, etc. Binds to axonin on neurons. The sequence is that of Neural cell adhesion molecule L1.1 (nadl1.1) from Danio rerio (Zebrafish).